Reading from the N-terminus, the 284-residue chain is MTAQILDGKATAAAIKSDLTARVAALKEKGVTPGLGTILVGDDPGSQKYVAGKHRDCAQVGIASIQRELPATATQEEIEAAVRELNEDPACTGYIVQLPLPKGIDENRILELMDPDKDADGLHPMNLGRLVLNEPAPLPCTPNGVLTLLRRYGVEIKGAEVVVVGRGVTIGRPMPLLLTRRSENATVTQCHTGTRDLSSHLKRADIIVAAAGSAHLIRPEDVKPGAAVLDVGVSRSAEGKIVGDVHPGVAEVAGWISPNPGGVGPMTRAQLLVNVVEAAERSVG.

NADP(+) is bound by residues 165–167 (GRG), threonine 192, and valine 233.

This sequence belongs to the tetrahydrofolate dehydrogenase/cyclohydrolase family. As to quaternary structure, homodimer.

It catalyses the reaction (6R)-5,10-methylene-5,6,7,8-tetrahydrofolate + NADP(+) = (6R)-5,10-methenyltetrahydrofolate + NADPH. The catalysed reaction is (6R)-5,10-methenyltetrahydrofolate + H2O = (6R)-10-formyltetrahydrofolate + H(+). It functions in the pathway one-carbon metabolism; tetrahydrofolate interconversion. Catalyzes the oxidation of 5,10-methylenetetrahydrofolate to 5,10-methenyltetrahydrofolate and then the hydrolysis of 5,10-methenyltetrahydrofolate to 10-formyltetrahydrofolate. The polypeptide is Bifunctional protein FolD 2 (Streptomyces avermitilis (strain ATCC 31267 / DSM 46492 / JCM 5070 / NBRC 14893 / NCIMB 12804 / NRRL 8165 / MA-4680)).